Reading from the N-terminus, the 334-residue chain is Formamidase (334 aa).

The CN hydrolase domain maps to 14–260 (FLVAAIQFPV…WEIVTGEIYP (247 aa)). Catalysis depends on glutamate 60, which acts as the Proton acceptor. Lysine 133 acts as the Proton donor in catalysis. The active-site Nucleophile is the cysteine 166.

This sequence belongs to the carbon-nitrogen hydrolase superfamily. Aliphatic amidase family.

The enzyme catalyses formamide + H2O = formate + NH4(+). In terms of biological role, is an aliphatic amidase with a restricted substrate specificity, as it only hydrolyzes formamide. This is Formamidase from Helicobacter acinonychis (strain Sheeba).